A 354-amino-acid polypeptide reads, in one-letter code: MQLQTTYPNNNYPIIVEHNAFEELSEYIQDYDKVFLIIDEYVDFNFKTKFMPFLESTHIYKIIVPAGEKMKSFEHYQQTLEHLLEYNLTRNTCLVAIGGGATGDFTGFLASSLLRGVDFIQVPTTILAHDSSVGGKVGINSIHGKNLIGAFYRPKAVIYDLNFLATLPYDEILSGYAEVYKHALLTGQVAVDDIEKHFSTKEKLQSLNDIDQFIFKGIKAKLNVIIKDEKEHNMRKYLNLGHTFGHAVEYKTKIPHGHAVMIGIIYQFIVANTLLDTQFDISYYANYLKKLHYPVQIVQQLNFDDMYHYMLTDKKNNGEGIQMVLLEELGKPRVCHVEKTILIKAFNDLQLVLK.

Residues 100-104 (GATGD), 124-125 (TT), Lys-136, Lys-145, and 163-166 (FLAT) contribute to the NAD(+) site. Positions 178, 242, and 256 each coordinate Zn(2+).

The protein belongs to the sugar phosphate cyclases superfamily. Dehydroquinate synthase family. Requires Co(2+) as cofactor. Zn(2+) is required as a cofactor. NAD(+) serves as cofactor.

It is found in the cytoplasm. It catalyses the reaction 7-phospho-2-dehydro-3-deoxy-D-arabino-heptonate = 3-dehydroquinate + phosphate. The protein operates within metabolic intermediate biosynthesis; chorismate biosynthesis; chorismate from D-erythrose 4-phosphate and phosphoenolpyruvate: step 2/7. In terms of biological role, catalyzes the conversion of 3-deoxy-D-arabino-heptulosonate 7-phosphate (DAHP) to dehydroquinate (DHQ). The polypeptide is 3-dehydroquinate synthase (Staphylococcus haemolyticus (strain JCSC1435)).